The chain runs to 396 residues: MAAAVDTFLFTSESVNEGHPDKLCDQISDAVLDACLAQDPESKVACETCTKTNLVMVFGEITTKANVDYEKIVRQTCRDIGFVSADVGLDADNCKVLVYIEQQSPDIAQGVHGHLTRRPEEIGAGDQGHMFGYATDETPELMPLSHVLATKLGARLTEVRKNGTCPWLRPDGKTQVTVEYYNENGAMVPIRVHTVLISTQHDETVTNDEIAADLKEHVIKPVIPEKYLDEKTIFHLNPSGRFVIGGPHGDAGLTGRKIIIDTYGGWGAHGGGAFSGKDPTKVDRSGAYIARQAAKSIVAAGLARRCIVQISYAIGVPEPLSVFVDTYGTGKIPDKEILKIVKETFDFRPGMIAINLDLLKGGSRYLKTAAYGHFGRDDADFTWETVKPLKWEKPQA.

A Mg(2+)-binding site is contributed by glutamate 13. Histidine 19 contacts ATP. Glutamate 47 contributes to the K(+) binding site. L-methionine is bound by residues glutamate 60 and glutamine 103. ATP contacts are provided by residues 171-173 (DGK), 239-242 (SGRF), aspartate 250, 256-257 (RK), alanine 273, lysine 277, and lysine 281. Aspartate 250 contacts L-methionine. Lysine 281 is a binding site for L-methionine.

This sequence belongs to the AdoMet synthase family. Homotetramer. Requires Mn(2+) as cofactor. Mg(2+) serves as cofactor. The cofactor is Co(2+). It depends on K(+) as a cofactor. As to expression, expressed in roots, stems and leaves (at protein level).

It is found in the cytoplasm. The enzyme catalyses L-methionine + ATP + H2O = S-adenosyl-L-methionine + phosphate + diphosphate. It participates in amino-acid biosynthesis; S-adenosyl-L-methionine biosynthesis; S-adenosyl-L-methionine from L-methionine: step 1/1. Functionally, catalyzes the formation of S-adenosylmethionine from methionine and ATP. The reaction comprises two steps that are both catalyzed by the same enzyme: formation of S-adenosylmethionine (AdoMet) and triphosphate, and subsequent hydrolysis of the triphosphate. May be involved in the synthesis of betain in response to abiotic stress such as high salinity. This chain is S-adenosylmethionine synthase 4 (SAMS4), found in Atriplex nummularia (Old man saltbush).